The following is a 427-amino-acid chain: Zinc finger protein 134 (427 aa).

A Glycyl lysine isopeptide (Lys-Gly) (interchain with G-Cter in SUMO2) cross-link involves residue lysine 20. Residues 50-72 (LPCDICGPILKDILHLDEHQGTH) form a C2H2-type 1 zinc finger. A C2H2-type 2; degenerate zinc finger spans residues 78–100 (HTCGACGRQFWFSANLHQYQKCY). Residues lysine 135 and lysine 139 each participate in a glycyl lysine isopeptide (Lys-Gly) (interchain with G-Cter in SUMO2) cross-link. C2H2-type zinc fingers lie at residues 176–198 (YKCS…QRIH), 204–226 (YECS…QRIH), 232–254 (YECS…KRIH), 260–282 (YKCN…QRVH), 288–310 (YKCS…ESIH), 316–338 (YDCS…QRIH), 344–366 (FECI…QRVH), 372–394 (FVCS…QRVH), and 400–422 (YECS…QKVH).

This sequence belongs to the krueppel C2H2-type zinc-finger protein family.

It is found in the nucleus. In terms of biological role, may be involved in transcriptional regulation. The sequence is that of Zinc finger protein 134 (ZNF134) from Homo sapiens (Human).